Here is a 90-residue protein sequence, read N- to C-terminus: DNA-binding protein HU (90 aa).

Belongs to the bacterial histone-like protein family. As to quaternary structure, homodimer.

Functionally, histone-like DNA-binding protein which is capable of wrapping DNA to stabilize it, and thus to prevent its denaturation under extreme environmental conditions. The protein is DNA-binding protein HU (hup) of Pasteurella multocida (strain Pm70).